The sequence spans 175 residues: Pituitary adenylate cyclase-activating polypeptide (175 aa).

Positions 1 to 24 are cleaved as a signal peptide; it reads MTMCSGARLALLVYGIIMHNSVSC. A propeptide spanning residues 25-78 is cleaved from the precursor; that stretch reads SPAAGLSFPGIRPEEEAYDQDGNPLQDFYDWDPPGAGSPASALRDAYALYYPAD. Positions 149 to 157 are important for receptor binding; sequence VKKYLAAVL. Leu-157 is modified (leucine amide). Lys-168 carries the lysine amide modification. Positions 172–175 are excised as a propeptide; sequence IAYL.

This sequence belongs to the glucagon family.

The protein localises to the secreted. Its function is as follows. PACAP is a neuropeptide involved in diverse array of physiological processes through activating the PACAP subfamily of class B1 G protein-coupled receptors: VIP receptor 1 (VIPR1), VIP receptor 2 (VIPR2), and PACAP type I receptor (ADCYAP1R1). Exerts neuroprotective and general cytoprotective effects due to anti-apoptotic, anti-inflammatory, and antioxidant actions. Promotes neuron projection development through the RAPGEF2/Rap1/B-Raf/ERK pathway. In chromaffin cells, induces long-lasting increase of intracellular calcium concentrations and neuroendocrine secretion. Involved in the control of glucose homeostasis, induces insulin secretion by pancreatic beta cells. PACAP exists in two bioactive forms from proteolysis of the same precursor protein, PACAP27 and PACAP38, which differ by eleven amino acid residues in the C-terminus. This Rattus norvegicus (Rat) protein is Pituitary adenylate cyclase-activating polypeptide (Adcyap1).